The sequence spans 207 residues: Macrophage immunometabolism regulator (207 aa).

An N-acetylmethionine modification is found at Met1. Residues Met1–Cys41 form a disordered region. A phosphoserine mark is found at Ser25, Ser140, and Ser167.

This sequence belongs to the UNC119-binding protein family. Interacts with UNC119 and UNC119B; interaction preferentially takes place when UNC119 and UNC119B are unliganded with myristoylated proteins.

The protein localises to the cytoplasm. It localises to the cell projection. Its subcellular location is the cilium. Its function is as follows. Regulates the macrophage function, by enhancing the resolution of inflammation and wound repair functions mediated by M2 macrophages. The regulation of macrophage function is, due at least in part, to its ability to inhibit glycolysis. May play also a role in trafficking of proteins via its interaction with UNC119 and UNC119B cargo adapters: may help the release of UNC119 and UNC119B cargo or the recycling of UNC119 and UNC119B. May play a role in ciliary membrane localization via its interaction with UNC119B and protein transport into photoreceptor cells. In Bos taurus (Bovine), this protein is Macrophage immunometabolism regulator (MACIR).